The following is a 466-amino-acid chain: MKSTVEQLSPTRVRINVEVPFAELEPDFQRAYKELAKQVRLPGFRPGKAPAKLLEARIGREAMLDQIVNDALPSRYGQAVAESDVQPLGRPNIEVTKKEYGQDLQFTAEVDIRPKISLPDLSALTVSVDPIEIGEDDVDAELQSLRTRFGTLTAVDRPVAVGDVVSIDLSATVDGEDIPNAAAEGLSHEVGSGRLIAGLDDAVVGLSADESRVFTAKLAAGEHAGQEAQVTVTVRSVKERELPEPDDEFAQLASEFDSIDELRASLSDQVRQAKRAQQAEQIRNATIDALLEQVDVPLPESYVQAQFDSVLHSALSGLNHDEARFNELLVEQGSSRAAFDAEARTASEKDVKRQLLLDALADELQVQVGQDDLTERLVTTSRQYGIEPQQLFGYLQERNQLPTMFADVRRELAIRAAVEAATVTDSDGNTIDTSEFFGKRVSAGEAEEAEPADEGAARAASDEATT.

The 82-residue stretch at 162–243 folds into the PPIase FKBP-type domain; sequence GDVVSIDLSA…VRSVKERELP (82 aa). Positions 428–466 are disordered; the sequence is GNTIDTSEFFGKRVSAGEAEEAEPADEGAARAASDEATT. Residues 457 to 466 show a composition bias toward low complexity; sequence ARAASDEATT.

Belongs to the FKBP-type PPIase family. Tig subfamily.

The protein resides in the cytoplasm. The enzyme catalyses [protein]-peptidylproline (omega=180) = [protein]-peptidylproline (omega=0). In terms of biological role, involved in protein export. Acts as a chaperone by maintaining the newly synthesized protein in an open conformation. Functions as a peptidyl-prolyl cis-trans isomerase. This chain is Trigger factor, found in Mycobacterium bovis (strain BCG / Tokyo 172 / ATCC 35737 / TMC 1019).